A 128-amino-acid polypeptide reads, in one-letter code: 3-aminoacrylate deaminase RutC (128 aa).

Belongs to the RutC family.

It catalyses the reaction (Z)-3-aminoacrylate + H2O + H(+) = 3-oxopropanoate + NH4(+). Involved in pyrimidine catabolism. Catalyzes the deamination of 3-aminoacrylate to malonic semialdehyde, a reaction that can also occur spontaneously. RutC may facilitate the reaction and modulate the metabolic fitness, rather than catalyzing essential functions. This Enterobacter sp. (strain 638) protein is 3-aminoacrylate deaminase RutC.